Here is a 256-residue protein sequence, read N- to C-terminus: DNA repair protein RecO (256 aa).

The protein belongs to the RecO family.

Involved in DNA repair and RecF pathway recombination. This Thiobacillus denitrificans (strain ATCC 25259 / T1) protein is DNA repair protein RecO.